We begin with the raw amino-acid sequence, 324 residues long: Pseudouridine-5'-phosphate glycosidase (324 aa).

Glu-43 acts as the Proton donor in catalysis. Substrate contacts are provided by Lys-104 and Val-124. Residue Asp-156 coordinates Mn(2+). 158–160 (SAD) serves as a coordination point for substrate. Lys-177 functions as the Nucleophile in the catalytic mechanism.

The protein belongs to the pseudouridine-5'-phosphate glycosidase family. As to quaternary structure, homotrimer. Requires Mn(2+) as cofactor.

The enzyme catalyses D-ribose 5-phosphate + uracil = psi-UMP + H2O. In terms of biological role, catalyzes the reversible cleavage of pseudouridine 5'-phosphate (PsiMP) to ribose 5-phosphate and uracil. Functions biologically in the cleavage direction, as part of a pseudouridine degradation pathway. In Salinispora tropica (strain ATCC BAA-916 / DSM 44818 / JCM 13857 / NBRC 105044 / CNB-440), this protein is Pseudouridine-5'-phosphate glycosidase.